The chain runs to 797 residues: Xaa-Pro dipeptidyl-peptidase (797 aa).

Residues S370, D490, and H521 each act as charge relay system in the active site.

Belongs to the peptidase S15 family. Homodimer.

It localises to the cytoplasm. The catalysed reaction is Hydrolyzes Xaa-Pro-|- bonds to release unblocked, N-terminal dipeptides from substrates including Ala-Pro-|-p-nitroanilide and (sequentially) Tyr-Pro-|-Phe-Pro-|-Gly-Pro-|-Ile.. Removes N-terminal dipeptides sequentially from polypeptides having unsubstituted N-termini provided that the penultimate residue is proline. The sequence is that of Xaa-Pro dipeptidyl-peptidase from Lacticaseibacillus rhamnosus (Lactobacillus rhamnosus).